The sequence spans 250 residues: Accessory gland-specific peptide 26Aa (250 aa).

Positions 1–18 (MNQILLCSQILLLFFTVA) are cleaved as a signal peptide. The segment at 79-100 (DYPINNSKSRKNSSTLPSPILT) is disordered. Positions 82–95 (INNSKSRKNSSTLP) are enriched in polar residues. Asn83, Asn90, and Asn131 each carry an N-linked (GlcNAc...) asparagine glycan. Disordered stretches follow at residues 172 to 191 (NVQNARKSTKSCKKRPSKDI) and 230 to 250 (NNPATDVPTGKSPSEGNPSTT). Positions 178–187 (KSTKSCKKRP) are enriched in basic residues. Residues 240–250 (KSPSEGNPSTT) are compositionally biased toward polar residues.

Proteolytically cleaved as it is secreted and in the recipient female. In terms of tissue distribution, main cells of the accessory glands of males.

Its subcellular location is the secreted. It localises to the extracellular space. Functionally, this protein is transferred from male to female's hemolymph during mating, affecting egglaying and behavior after mating. This chain is Accessory gland-specific peptide 26Aa (Acp26Aa), found in Drosophila mauritiana (Fruit fly).